Here is a 1009-residue protein sequence, read N- to C-terminus: MSLAFKIFFPQTLRALSRKELCLFRKHHWRDVRQFSQWSETDLLHGHPLFLRRKPVLSFQGSHLRSRATYLVFLPGLHVGLCSGPCEMAEQRFCVDYAKRGTAGCKKCKEKIVKGVCRIGKVVPNPFSESGGDMKEWYHIKCMFEKLERARATTKKIEDLTELEGWEELEDNEKEQITQHIADLSSKAAGTPKKKAVVQAKLTTTGQVTSPVKGASFVTSTNPRKFSGFSAKPNNSGEAPSSPTPKRSLSSSKCDPRHKDCLLREFRKLCAMVADNPSYNTKTQIIQDFLRKGSAGDGFHGDVYLTVKLLLPGVIKTVYNLNDKQIVKLFSRIFNCNPDDMARDLEQGDVSETIRVFFEQSKSFPPAAKSLLTIQEVDEFLLRLSKLTKEDEQQQALQDIASRCTANDLKCIIRLIKHDLKMNSGAKHVLDALDPNAYEAFKASRNLQDVVERVLHNAQEVEKEPGQRRALSVQASLMTPVQPMLAEACKSVEYAMKKCPNGMFSEIKYDGERVQVHKNGDHFSYFSRSLKPVLPHKVAHFKDYIPQAFPGGHSMILDSEVLLIDNKTGKPLPFGTLGVHKKAAFQDANVCLFVFDCIYFNDVSLMDRPLCERRKFLHDNMVEIPNRIMFSEMKRVTKALDLADMITRVIQEGLEGLVLKDVKGTYEPGKRHWLKVKKDYLNEGAMADTADLVVLGAFYGQGSKGGMMSIFLMGCYDPGSQKWCTVTKCAGGHDDATLARLQNELDMVKISKDPSKIPSWLKVNKIYYPDFIVPDPKKAAVWEITGAEFSKSEAHTADGISIRFPRCTRIRDDKDWKSATNLPQLKELYQLSKEKADFTVVAGDEGSSTTGGSSEENKGPSGSAVSRKAPSKPSASTKKAEGKLSNSNSKDGNMQTAKPSAMKVGEKLATKSSPVKVGEKRKAADETLCQTKVLLDIFTGVRLYLPPSTPDFSRLRRYFVAFDGDLVQEFDMTSATHVLGSRDKNPAAQQVSPEWIWACIRKRRLVAPC.

The transit peptide at 1–42 (MSLAFKIFFPQTLRALSRKELCLFRKHHWRDVRQFSQWSETD) directs the protein to the mitochondrion. The PARP-type zinc finger occupies 93–185 (FCVDYAKRGT…QITQHIADLS (93 aa)). C105, C108, H139, and C142 together coordinate Zn(2+). A phosphoserine mark is found at S210, S216, S227, and S242. Residues 224-256 (RKFSGFSAKPNNSGEAPSSPTPKRSLSSSKCDP) form a disordered region. Positions 240–252 (PSSPTPKRSLSSS) are enriched in low complexity. Interaction with DNA regions lie at residues 277–280 (PSYN), 318–323 (VYNLND), 388–391 (TKED), and 421–427 (KMNSGAK). E506 contacts ATP. The N6-AMP-lysine intermediate role is filled by K508. R513 and R528 together coordinate ATP. Positions 560 and 655 each coordinate Mg(2+). 3 residues coordinate ATP: K660, R671, and K675. Residues 842–917 (AGDEGSSTTG…LATKSSPVKV (76 aa)) form a disordered region. Low complexity-rich tracts occupy residues 845-854 (EGSSTTGGSS) and 863-877 (SAVS…SAST). Polar residues predominate over residues 884 to 898 (LSNSNSKDGNMQTAK). S913 bears the Phosphoserine mark. The 77-residue stretch at 933-1009 (VLLDIFTGVR…IRKRRLVAPC (77 aa)) folds into the BRCT domain.

This sequence belongs to the ATP-dependent DNA ligase family. In terms of assembly, isoform 3 interacts (via BRCT domain) with the nuclear DNA-repair protein XRCC1. Interacts with POLG. Interacts with POLB. Mg(2+) is required as a cofactor. In terms of tissue distribution, testis, thymus, prostate and heart.

The protein resides in the mitochondrion. The protein localises to the nucleus. It carries out the reaction ATP + (deoxyribonucleotide)n-3'-hydroxyl + 5'-phospho-(deoxyribonucleotide)m = (deoxyribonucleotide)n+m + AMP + diphosphate.. In terms of biological role, isoform 3 functions as a heterodimer with DNA-repair protein XRCC1 in the nucleus and can correct defective DNA strand-break repair and sister chromatid exchange following treatment with ionizing radiation and alkylating agents. Isoform 1 is targeted to mitochondria, where it functions as a DNA ligase in mitochondrial base-excision DNA repair. The polypeptide is DNA ligase 3 (LIG3) (Homo sapiens (Human)).